Reading from the N-terminus, the 727-residue chain is Glucans biosynthesis glucosyltransferase H (727 aa).

Positions 18–38 (SAMPNERPGAMEPQNLSKMPE) are disordered. 7 helical membrane passes run 58 to 78 (FLVV…MGAV), 97 to 117 (VNFC…LILL), 278 to 298 (LQQF…GWWV), 408 to 428 (IMAY…LMLA), 460 to 480 (LFYI…LLLL), 496 to 516 (IFSV…MMFI), and 572 to 592 (LLAW…ISAW).

Belongs to the glycosyltransferase 2 family. OpgH subfamily.

Its subcellular location is the cell inner membrane. The protein operates within glycan metabolism; osmoregulated periplasmic glucan (OPG) biosynthesis. Involved in the biosynthesis of osmoregulated periplasmic glucans (OPGs). This is Glucans biosynthesis glucosyltransferase H from Shewanella baltica (strain OS185).